Consider the following 204-residue polypeptide: ATP phosphoribosyltransferase (204 aa).

This sequence belongs to the ATP phosphoribosyltransferase family. Short subfamily. In terms of assembly, heteromultimer composed of HisG and HisZ subunits.

Its subcellular location is the cytoplasm. The catalysed reaction is 1-(5-phospho-beta-D-ribosyl)-ATP + diphosphate = 5-phospho-alpha-D-ribose 1-diphosphate + ATP. Its pathway is amino-acid biosynthesis; L-histidine biosynthesis; L-histidine from 5-phospho-alpha-D-ribose 1-diphosphate: step 1/9. In terms of biological role, catalyzes the condensation of ATP and 5-phosphoribose 1-diphosphate to form N'-(5'-phosphoribosyl)-ATP (PR-ATP). Has a crucial role in the pathway because the rate of histidine biosynthesis seems to be controlled primarily by regulation of HisG enzymatic activity. The polypeptide is ATP phosphoribosyltransferase (Staphylococcus aureus (strain Mu3 / ATCC 700698)).